We begin with the raw amino-acid sequence, 201 residues long: Ras-related protein Rab-9B (201 aa).

Val18, Gly19, Lys20, Ser21, Ser22, Asp33, Ser34, Ala36, His38, and Thr39 together coordinate GTP. Mg(2+) is bound at residue Ser21. The Switch 1 motif lies at 31 to 42 (KFDSQAFHTIGV). The residue at position 34 (Ser34) is a Phosphoserine. Thr39 and Asp62 together coordinate Mg(2+). The short motif at 64-78 (AGQERFKSLRTPFYR) is the Switch 2 element. GTP is bound by residues Gly65, Asn124, Lys125, Ala155, and Lys156. Residues Cys200 and Cys201 are each lipidated (S-geranylgeranyl cysteine).

It belongs to the small GTPase superfamily. Rab family. As to quaternary structure, interacts (GTP-bound form) with SGSM1; the GDP-bound form has much lower affinity for SGSM1. The GTP-bound form but not the GDP-bound form interacts with HPS4 and the BLOC-3 complex (heterodimer of HPS1 and HPS4) but does not interact with HPS1 alone. Interacts (GTP-bound form) with NDE1. It depends on Mg(2+) as a cofactor.

The protein resides in the cell membrane. Its subcellular location is the cytoplasmic vesicle. The protein localises to the phagosome membrane. The catalysed reaction is GTP + H2O = GDP + phosphate + H(+). Regulated by guanine nucleotide exchange factors (GEFs) which promote the exchange of bound GDP for free GTP. Regulated by GTPase activating proteins (GAPs) which increase the GTP hydrolysis activity. Inhibited by GDP dissociation inhibitors (GDIs). In terms of biological role, the small GTPases Rab are key regulators of intracellular membrane trafficking, from the formation of transport vesicles to their fusion with membranes. Rabs cycle between an inactive GDP-bound form and an active GTP-bound form that is able to recruit to membranes different sets of downstream effectors directly responsible for vesicle formation, movement, tethering and fusion. RAB9B is involved in the transport of proteins between the endosomes and the trans Golgi network. May use NDE1/NDEL1 as an effector to interact with the dynein motor complex in order to control retrograde trafficking of RAB9-associated late endosomes to the TGN. This is Ras-related protein Rab-9B from Mus musculus (Mouse).